The chain runs to 181 residues: Secreted chorismate mutase (181 aa).

A signal peptide spans 1–20 (MLASVALAALAGVGTPHATA). The Chorismate mutase domain occupies 21 to 100 (DDASPLVPLV…ATSSVEHTRF (80 aa)). Substrate contacts are provided by residues arginine 36, lysine 47, aspartate 56, 59 to 63 (REQQV), 92 to 96 (TSSVE), and arginine 121. Cysteines 147 and 180 form a disulfide.

Homodimer.

It is found in the secreted. It catalyses the reaction chorismate = prephenate. It functions in the pathway metabolic intermediate biosynthesis; prephenate biosynthesis; prephenate from chorismate: step 1/1. Catalyzes the Claisen rearrangement of chorismate to prephenate. May play some role in the pathogenicity. In Mycolicibacterium smegmatis (strain ATCC 700084 / mc(2)155) (Mycobacterium smegmatis), this protein is Secreted chorismate mutase.